A 172-amino-acid chain; its full sequence is Small ribosomal subunit protein uS5 (172 aa).

The region spanning 17-80 (LREKMISVNR…EQARRNMFKV (64 aa)) is the S5 DRBM domain.

This sequence belongs to the universal ribosomal protein uS5 family. Part of the 30S ribosomal subunit. Contacts proteins S4 and S8.

Functionally, with S4 and S12 plays an important role in translational accuracy. Its function is as follows. Located at the back of the 30S subunit body where it stabilizes the conformation of the head with respect to the body. This chain is Small ribosomal subunit protein uS5, found in Paraburkholderia phytofirmans (strain DSM 17436 / LMG 22146 / PsJN) (Burkholderia phytofirmans).